The following is a 322-amino-acid chain: Ribosomal RNA large subunit methyltransferase F (322 aa).

It belongs to the methyltransferase superfamily. METTL16/RlmF family.

The protein localises to the cytoplasm. It catalyses the reaction adenosine(1618) in 23S rRNA + S-adenosyl-L-methionine = N(6)-methyladenosine(1618) in 23S rRNA + S-adenosyl-L-homocysteine + H(+). Functionally, specifically methylates the adenine in position 1618 of 23S rRNA. In Cytophaga hutchinsonii (strain ATCC 33406 / DSM 1761 / CIP 103989 / NBRC 15051 / NCIMB 9469 / D465), this protein is Ribosomal RNA large subunit methyltransferase F.